We begin with the raw amino-acid sequence, 206 residues long: Superoxide dismutase [Mn] (206 aa).

Mn(2+) contacts are provided by H27, H82, D168, and H172.

Belongs to the iron/manganese superoxide dismutase family. Homodimer. Mn(2+) serves as cofactor.

The enzyme catalyses 2 superoxide + 2 H(+) = H2O2 + O2. Functionally, destroys superoxide anion radicals which are normally produced within the cells and which are toxic to biological systems. The polypeptide is Superoxide dismutase [Mn] (sodA) (Salmonella typhimurium (strain LT2 / SGSC1412 / ATCC 700720)).